The sequence spans 434 residues: Enolase (434 aa).

Position 167 (glutamine 167) interacts with (2R)-2-phosphoglycerate. The active-site Proton donor is the glutamate 209. Aspartate 246, glutamate 291, and aspartate 318 together coordinate Mg(2+). Lysine 343, arginine 372, serine 373, and lysine 394 together coordinate (2R)-2-phosphoglycerate. The Proton acceptor role is filled by lysine 343.

This sequence belongs to the enolase family. Component of the RNA degradosome, a multiprotein complex involved in RNA processing and mRNA degradation. Requires Mg(2+) as cofactor.

It localises to the cytoplasm. The protein localises to the secreted. Its subcellular location is the cell surface. The catalysed reaction is (2R)-2-phosphoglycerate = phosphoenolpyruvate + H2O. It participates in carbohydrate degradation; glycolysis; pyruvate from D-glyceraldehyde 3-phosphate: step 4/5. Catalyzes the reversible conversion of 2-phosphoglycerate (2-PG) into phosphoenolpyruvate (PEP). It is essential for the degradation of carbohydrates via glycolysis. The protein is Enolase of Buchnera aphidicola subsp. Acyrthosiphon pisum (strain APS) (Acyrthosiphon pisum symbiotic bacterium).